The following is a 441-amino-acid chain: UDP-N-acetylglucosamine--N-acetylmuramyl-(pentapeptide) pyrophosphoryl-undecaprenol N-acetylglucosamine transferase (441 aa).

UDP-N-acetyl-alpha-D-glucosamine contacts are provided by residues 28 to 30 (TGG), asparagine 140, arginine 176, serine 204, isoleucine 257, and glutamine 302.

It belongs to the glycosyltransferase 28 family. MurG subfamily.

Its subcellular location is the cell inner membrane. It carries out the reaction di-trans,octa-cis-undecaprenyl diphospho-N-acetyl-alpha-D-muramoyl-L-alanyl-D-glutamyl-meso-2,6-diaminopimeloyl-D-alanyl-D-alanine + UDP-N-acetyl-alpha-D-glucosamine = di-trans,octa-cis-undecaprenyl diphospho-[N-acetyl-alpha-D-glucosaminyl-(1-&gt;4)]-N-acetyl-alpha-D-muramoyl-L-alanyl-D-glutamyl-meso-2,6-diaminopimeloyl-D-alanyl-D-alanine + UDP + H(+). Its pathway is cell wall biogenesis; peptidoglycan biosynthesis. In terms of biological role, cell wall formation. Catalyzes the transfer of a GlcNAc subunit on undecaprenyl-pyrophosphoryl-MurNAc-pentapeptide (lipid intermediate I) to form undecaprenyl-pyrophosphoryl-MurNAc-(pentapeptide)GlcNAc (lipid intermediate II). The protein is UDP-N-acetylglucosamine--N-acetylmuramyl-(pentapeptide) pyrophosphoryl-undecaprenol N-acetylglucosamine transferase of Xanthomonas oryzae pv. oryzae (strain KACC10331 / KXO85).